The chain runs to 449 residues: tRNA-2-methylthio-N(6)-dimethylallyladenosine synthase (449 aa).

The 116-residue stretch at 4 to 119 (RTFHIETFGC…APQALDRLVE (116 aa)) folds into the MTTase N-terminal domain. Cysteine 13, cysteine 48, cysteine 82, cysteine 158, cysteine 162, and cysteine 165 together coordinate [4Fe-4S] cluster. A Radical SAM core domain is found at 144-375 (GAVPASVFVN…QTLQNRLTER (232 aa)). In terms of domain architecture, TRAM spans 378–446 (QDMVGRKVEV…KHSLLAEQAG (69 aa)).

This sequence belongs to the methylthiotransferase family. MiaB subfamily. As to quaternary structure, monomer. Requires [4Fe-4S] cluster as cofactor.

It is found in the cytoplasm. The catalysed reaction is N(6)-dimethylallyladenosine(37) in tRNA + (sulfur carrier)-SH + AH2 + 2 S-adenosyl-L-methionine = 2-methylsulfanyl-N(6)-dimethylallyladenosine(37) in tRNA + (sulfur carrier)-H + 5'-deoxyadenosine + L-methionine + A + S-adenosyl-L-homocysteine + 2 H(+). In terms of biological role, catalyzes the methylthiolation of N6-(dimethylallyl)adenosine (i(6)A), leading to the formation of 2-methylthio-N6-(dimethylallyl)adenosine (ms(2)i(6)A) at position 37 in tRNAs that read codons beginning with uridine. In Nitratidesulfovibrio vulgaris (strain ATCC 29579 / DSM 644 / CCUG 34227 / NCIMB 8303 / VKM B-1760 / Hildenborough) (Desulfovibrio vulgaris), this protein is tRNA-2-methylthio-N(6)-dimethylallyladenosine synthase.